The chain runs to 294 residues: HTH-type transcriptional regulator ClcR (294 aa).

In terms of domain architecture, HTH lysR-type spans 1–58; the sequence is MEFRQLRYFIAVAEEGNIGAAARRLHISQPPITRQIQALEQDLGVVLFERTHRGVELT. The segment at residues 18 to 37 is a DNA-binding region (H-T-H motif); sequence IGAAARRLHISQPPITRQIQ.

Belongs to the LysR transcriptional regulatory family.

Its subcellular location is the cytoplasm. Its function is as follows. Involved in regulation of chlorinated catechol metabolism. Transcriptional activator of the clcABD chlorocatechol oxidative operon. The sequence is that of HTH-type transcriptional regulator ClcR (clcR) from Pseudomonas putida (Arthrobacter siderocapsulatus).